Consider the following 120-residue polypeptide: U13-lycotoxin-Ls1a (120 aa).

Positions 1–16 (MKILFVLISILYAVYC) are cleaved as a signal peptide. Positions 17–54 (FSSEEDVDSAYLANELEPVEDINSEQYAALEPKEEQER) are excised as a propeptide. 4 disulfides stabilise this stretch: Cys-56/Cys-70, Cys-63/Cys-76, Cys-69/Cys-87, and Cys-78/Cys-85. Residues 56–95 (CADMGQDCKDDCDCCLNIATCNCWFGRYFCSCTFGDYQTC) form the Agouti domain.

This sequence belongs to the neurotoxin 05 (agouti) family. Post-translationally, contains 6 disulfide bonds. As to expression, expressed by the venom gland.

The protein localises to the secreted. The sequence is that of U13-lycotoxin-Ls1a from Lycosa singoriensis (Wolf spider).